The sequence spans 294 residues: 1,4-dihydroxy-2-naphthoate octaprenyltransferase (294 aa).

A run of 6 helical transmembrane segments spans residues 35 to 55 (SAVW…VIGV), 103 to 123 (AGLA…ATCI), 140 to 160 (GFGE…GTEY), 166 to 186 (VDWV…SVLV), 220 to 240 (LLVA…WCAV), and 272 to 292 (GLAM…AGSV).

The protein belongs to the MenA family. Type 1 subfamily.

The protein resides in the cell membrane. It carries out the reaction an all-trans-polyprenyl diphosphate + 1,4-dihydroxy-2-naphthoate + H(+) = a 2-demethylmenaquinol + CO2 + diphosphate. It participates in quinol/quinone metabolism; menaquinone biosynthesis; menaquinol from 1,4-dihydroxy-2-naphthoate: step 1/2. Conversion of 1,4-dihydroxy-2-naphthoate (DHNA) to demethylmenaquinone (DMK). The sequence is that of 1,4-dihydroxy-2-naphthoate octaprenyltransferase from Mycobacterium leprae (strain TN).